The primary structure comprises 404 residues: UPF0674 endoplasmic reticulum membrane protein YNR021W (404 aa).

Residue Ser2 is modified to N-acetylserine. An N-linked (GlcNAc...) asparagine glycan is attached at Asn44. The helical transmembrane segment at 49–68 (LCALGVLFLVYAFYKFGNSV) threads the bilayer. N-linked (GlcNAc...) asparagine glycosylation is present at Asn98. Residues 369–404 (AKRRQLKASGQQEKVDQKMKEKRERRLKNKQRTRFQ) are disordered. Residues 381–392 (EKVDQKMKEKRE) show a composition bias toward basic and acidic residues. Positions 393-404 (RRLKNKQRTRFQ) are enriched in basic residues.

This sequence belongs to the UPF0674 family.

Its subcellular location is the endoplasmic reticulum membrane. The chain is UPF0674 endoplasmic reticulum membrane protein YNR021W from Saccharomyces cerevisiae (strain ATCC 204508 / S288c) (Baker's yeast).